Consider the following 466-residue polypeptide: Cell division protein FtsP (466 aa).

The tat-type signal signal peptide spans 1–28 (MNYSRRSLFKKTLIATALSALPATLLAA).

Belongs to the FtsP family. In terms of processing, predicted to be exported by the Tat system. The position of the signal peptide cleavage has not been experimentally proven.

Its subcellular location is the periplasm. Its function is as follows. Cell division protein that is required for growth during stress conditions. May be involved in protecting or stabilizing the divisomal assembly under conditions of stress. The chain is Cell division protein FtsP from Actinobacillus succinogenes (strain ATCC 55618 / DSM 22257 / CCUG 43843 / 130Z).